The chain runs to 88 residues: Apolipoprotein C-I (88 aa).

Residues 1-26 (MRLFIALPVLIVVVAMALEGPAPAQA) form the signal peptide.

It belongs to the apolipoprotein C1 family.

The protein resides in the secreted. In terms of biological role, inhibitor of lipoprotein binding to the low density lipoprotein (LDL) receptor, LDL receptor-related protein, and very low density lipoprotein (VLDL) receptor. Associates with high density lipoproteins (HDL) and the triacylglycerol-rich lipoproteins in the plasma and makes up about 10% of the protein of the VLDL and 2% of that of HDL. Appears to interfere directly with fatty acid uptake and is also the major plasma inhibitor of cholesteryl ester transfer protein (CETP). Binds free fatty acids and reduces their intracellular esterification. Modulates the interaction of APOE with beta-migrating VLDL and inhibits binding of beta-VLDL to the LDL receptor-related protein. This Rattus norvegicus (Rat) protein is Apolipoprotein C-I (Apoc1).